A 193-amino-acid polypeptide reads, in one-letter code: Molybdenum cofactor guanylyltransferase (193 aa).

GTP contacts are provided by residues 8 to 10 (LAG), Lys-21, Asp-67, and Asp-98. Residue Asp-98 participates in Mg(2+) binding.

Belongs to the MobA family. Monomer. Mg(2+) serves as cofactor.

It is found in the cytoplasm. It catalyses the reaction Mo-molybdopterin + GTP + H(+) = Mo-molybdopterin guanine dinucleotide + diphosphate. Transfers a GMP moiety from GTP to Mo-molybdopterin (Mo-MPT) cofactor (Moco or molybdenum cofactor) to form Mo-molybdopterin guanine dinucleotide (Mo-MGD) cofactor. The chain is Molybdenum cofactor guanylyltransferase from Cereibacter sphaeroides (strain ATCC 17029 / ATH 2.4.9) (Rhodobacter sphaeroides).